The primary structure comprises 754 residues: 17S U2 SnRNP complex component HTATSF1 (754 aa).

Disordered stretches follow at residues 1 to 53 (MSGT…YEWD) and 81 to 122 (GASS…KAES). S2 is subject to N-acetylserine. The span at 90–122 (EDVHARTAEEPPQEKAPEPTDPRKKGEKRKAES) shows a compositional bias: basic and acidic residues. 2 RRM domains span residues 133-218 (TNVY…VAKF) and 264-349 (RVVI…AWDG). A U2AF homology motif (UHM) region spans residues 259–353 (RMRHERVVII…AQAWDGTTDY (95 aa)). The residue at position 297 (K297) is an N6-acetyllysine. The disordered stretch occupies residues 380 to 415 (RGLRRSDSVSASERAGPSRARHFSEHPSTSKMNAQE). The tract at residues 381–754 (GLRRSDSVSA…ILSSDDDDDI (374 aa)) is mediates interaction with the P-TEFb complex. Phosphoserine occurs at positions 387, 403, 407, and 409. Over residues 405–415 (HPSTSKMNAQE) the composition is skewed to polar residues. Residues K429 and K430 each participate in a glycyl lysine isopeptide (Lys-Gly) (interchain with G-Cter in SUMO2) cross-link. Residues 433–754 (KTEDGGEFEE…ILSSDDDDDI (322 aa)) form a disordered region. Residues S445, S452, and S453 each carry the phosphoserine modification. A compositionally biased stretch (basic and acidic residues) spans 462-476 (CPGKESEEGCPKRGF). Phosphoserine occurs at positions 481, 485, 494, 498, 521, and 529. Over residues 508–538 (LRNDCEENGFAKESEDDPNKESEEEVGPTKE) the composition is skewed to basic and acidic residues. Over residues 539 to 552 (SEEDDSEKESDEDC) the composition is skewed to acidic residues. Positions 553-563 (SEKQSEDGSER) are enriched in basic and acidic residues. Phosphoserine occurs at positions 557, 561, and 579. Over residues 564 to 579 (EFEENGLEKDLDEEGS) the composition is skewed to acidic residues. Positions 580-590 (EKELHENVLDK) are enriched in basic and acidic residues. The segment covering 591–606 (ELEENDSENSEFEDDG) has biased composition (acidic residues). A phosphoserine mark is found at S597, S600, S607, S616, and S624. Composition is skewed to acidic residues over residues 613–633 (EEGS…EEDT) and 640–651 (DESNEKEDEEYA). The residue at position 633 (T633) is a Phosphothreonine. The residue at position 642 (S642) is a Phosphoserine. Residues 652–674 (DEKGLEAADKKEEEGDADEKLFE) show a composition bias toward basic and acidic residues. The span at 675 to 713 (ESDDKEDEDADGKEVEDADEKLFEDDDSNEKLFDEEEDS) shows a compositional bias: acidic residues. A phosphoserine mark is found at S676, S702, S713, S721, and S748. The segment covering 714–725 (NEKLFDDSDERG) has biased composition (basic and acidic residues).

It belongs to the HTATSF1 family. As to quaternary structure, component of the 17S U2 SnRNP complex, a ribonucleoprotein complex that contains small nuclear RNA (snRNA) U2 and a number of specific proteins. Within the 17S U2 SnRNP complex, interacts (via UHM region) directly with SF3B1. Component of a complex which is at least composed of HTATSF1/Tat-SF1, the P-TEFb complex components CDK9 and CCNT1, RNA polymerase II, SUPT5H, and NCL/nucleolin. Interacts with GTF2F2/RAP30 and POLR2A. Interacts with TCERG1/CA150. Interacts with (poly-ADP-ribosylated) RPA1; promoting HTATSF1 recruitment to DNA damage sites. Interacts (when phosphorylated) with TOPBP1; promoting recruitment of TOPBP1 to DNA damage sites during S-phase. In terms of processing, phosphorylation at Ser-748 by CK2 during S-phase in response to DNA damage promotes interaction with TOPBP1 and double-strand break (DSB) repair via homologous recombination.

Its subcellular location is the nucleus. It is found in the chromosome. Component of the 17S U2 SnRNP complex of the spliceosome, a large ribonucleoprotein complex that removes introns from transcribed pre-mRNAs. The 17S U2 SnRNP complex (1) directly participates in early spliceosome assembly and (2) mediates recognition of the intron branch site during pre-mRNA splicing by promoting the selection of the pre-mRNA branch-site adenosine, the nucleophile for the first step of splicing. Within the 17S U2 SnRNP complex, HTATSF1 is required to stabilize the branchpoint-interacting stem loop. HTATSF1 is displaced from the 17S U2 SnRNP complex before the stable addition of the 17S U2 SnRNP complex to the spliceosome, destabilizing the branchpoint-interacting stem loop and allowing to probe intron branch site sequences. Also acts as a regulator of transcriptional elongation, possibly by mediating the reciprocal stimulatory effect of splicing on transcriptional elongation. Involved in double-strand break (DSB) repair via homologous recombination in S-phase by promoting the recruitment of TOPBP1 to DNA damage sites. Mechanistically, HTATSF1 is (1) recruited to DNA damage sites in S-phase via interaction with poly-ADP-ribosylated RPA1 and (2) phosphorylated by CK2, promoting recruitment of TOPBP1, thereby facilitating RAD51 nucleofilaments formation and RPA displacement, followed by homologous recombination. The protein is 17S U2 SnRNP complex component HTATSF1 (HTATSF1) of Pongo abelii (Sumatran orangutan).